The chain runs to 246 residues: Large ribosomal subunit protein uL2 (246 aa).

The interval 196 to 226 is disordered; the sequence is MSPYAHPHGGGSHQKGGTPVPKTAPPGQKVG.

It belongs to the universal ribosomal protein uL2 family. As to quaternary structure, part of the 50S ribosomal subunit. Forms a bridge to the 30S subunit in the 70S ribosome.

Functionally, one of the primary rRNA binding proteins. Required for association of the 30S and 50S subunits to form the 70S ribosome, for tRNA binding and peptide bond formation. It has been suggested to have peptidyltransferase activity; this is somewhat controversial. Makes several contacts with the 16S rRNA in the 70S ribosome. The protein is Large ribosomal subunit protein uL2 of Pyrobaculum arsenaticum (strain DSM 13514 / JCM 11321 / PZ6).